Here is a 635-residue protein sequence, read N- to C-terminus: MTLRSPVEFQDQFDVIVVGAGHAGCEAALATARLGCRTLLLTLNLDRIAWQPCNPAVGGPAKSQLTHEVDALGGEIGKMADRTYLQKRVLNISRGPAVWALRAQTDKREYAAVMKNIVENQPNLSIREGMVTDLVLGDNDEIQGVQTYFGACFGAQSVVITTGTFLGGKIWIGNKSMPAGRAGEFAAVGLTETLNELGFETGRLKTGTPARVDRRSVDYDKLEPQPPDEQVSWFSFDPEVWVEREQMNCYLTRTTAKTHQLIKDNLHLSPIYGGFIDSKGPRYCPSIEDKIVRFADKESHQIFIEPEGRDIPELYIQGFSTGLPENVQLAMLQTLPGLENCVMLRPAYAVEYDFLPATQCYPSLMTKKVAGLFCAGQINGTTGYEEAAAQGLVAGINAARHCQGKSLIIFSREGSYLGTLIDDLCTKDLREPYRMLTSRSEYRLILRSDNADQRLTPLGREIGLIDDRRWDLFQTKQANITAEKERLYSTRIKEQDAVGKEIVDYTQQKIKGSIVLAELLRRPGFHYPDLEKFQLGNEELKPEEKTSVEIEIKYSGYIKRQQTQIEQVSRHSQKRLPPGLNYMAIETLSMEAREKLTQFQPLTIGQAGRIGGVNPADINALLVYLETQLRRSVSP.

Residue 19–24 participates in FAD binding; the sequence is GAGHAG. 280 to 294 is a binding site for NAD(+); that stretch reads GPRYCPSIEDKIVRF.

Belongs to the MnmG family. In terms of assembly, homodimer. Heterotetramer of two MnmE and two MnmG subunits. FAD is required as a cofactor.

It localises to the cytoplasm. Functionally, NAD-binding protein involved in the addition of a carboxymethylaminomethyl (cmnm) group at the wobble position (U34) of certain tRNAs, forming tRNA-cmnm(5)s(2)U34. The chain is tRNA uridine 5-carboxymethylaminomethyl modification enzyme MnmG from Synechocystis sp. (strain ATCC 27184 / PCC 6803 / Kazusa).